Reading from the N-terminus, the 202-residue chain is Ribosomal RNA small subunit methyltransferase G (202 aa).

Residues Gly75, Phe80, 125–126 (VQ), and Arg139 contribute to the S-adenosyl-L-methionine site.

Belongs to the methyltransferase superfamily. RNA methyltransferase RsmG family.

It is found in the cytoplasm. In terms of biological role, specifically methylates the N7 position of a guanine in 16S rRNA. This chain is Ribosomal RNA small subunit methyltransferase G, found in Mesomycoplasma hyopneumoniae (strain 7448) (Mycoplasma hyopneumoniae).